The sequence spans 614 residues: Probable peptide-binding protein YejA (614 aa).

The N-terminal stretch at 1–27 is a signal peptide; that stretch reads MILAPLKSRILIALAASALLIPAVASA.

The protein belongs to the bacterial solute-binding protein 5 family. The complex is composed of one ATP-binding protein (YejF), two transmembrane proteins (YejB and YejE) and a solute-binding protein (YejA).

It is found in the periplasm. Its function is as follows. Probably part of the ABC transporter complex YejABEF, which is likely involved in broad-spectrum peptide import. The sequence is that of Probable peptide-binding protein YejA from Agrobacterium fabrum (strain C58 / ATCC 33970) (Agrobacterium tumefaciens (strain C58)).